A 177-amino-acid chain; its full sequence is Ribonuclease H (177 aa).

Positions 1–142 (MSKQVEIFTD…ADELAREGMA (142 aa)) constitute an RNase H type-1 domain. Mg(2+) contacts are provided by Asp10, Glu48, Asp70, and Asp134. The segment covering 126 to 138 (GHTENERADELAR) has biased composition (basic and acidic residues). The interval 126-177 (GHTENERADELAREGMAPFKKGSFKPAASAPKPDAQLKQPVATKARRSTQSY) is disordered.

This sequence belongs to the RNase H family. Monomer. Mg(2+) serves as cofactor.

The protein localises to the cytoplasm. The enzyme catalyses Endonucleolytic cleavage to 5'-phosphomonoester.. Functionally, endonuclease that specifically degrades the RNA of RNA-DNA hybrids. The polypeptide is Ribonuclease H (Mesorhizobium japonicum (strain LMG 29417 / CECT 9101 / MAFF 303099) (Mesorhizobium loti (strain MAFF 303099))).